The following is a 157-amino-acid chain: MHCPFCNTVDTKVIDSRLVSEGSQIKRRRQCAICHERFTTLEHAELVMPRVIKNDDLLEPFNEQKLRSGMRKALEKRPVSTDALETAIHQIKSQLRATGEPEVPSKMLGQFVMEALKKLDKIAYIRFASVYRSFEDVREFGEEIAKLQDNPSLHQKD.

A zinc finger lies at 3–34 (CPFCNTVDTKVIDSRLVSEGSQIKRRRQCAIC). The ATP-cone domain occupies 49-139 (PRVIKNDDLL…VYRSFEDVRE (91 aa)).

It belongs to the NrdR family. The cofactor is Zn(2+).

In terms of biological role, negatively regulates transcription of bacterial ribonucleotide reductase nrd genes and operons by binding to NrdR-boxes. The protein is Transcriptional repressor NrdR of Hamiltonella defensa subsp. Acyrthosiphon pisum (strain 5AT).